We begin with the raw amino-acid sequence, 168 residues long: DOMON domain-containing protein Y73F4A.2 (168 aa).

The first 18 residues, 1 to 18 (MFRSIAVLSALLFAFASA), serve as a signal peptide directing secretion. The DOMON domain maps to 26–143 (SDFEVYWRFA…CQKWRFVKSG (118 aa)). Asn36 carries N-linked (GlcNAc...) asparagine glycosylation. A disordered region spans residues 148–168 (GQLTRNDKSPKEKKVCPMECN). Residues 152 to 168 (RNDKSPKEKKVCPMECN) are compositionally biased toward basic and acidic residues.

Its subcellular location is the secreted. This is DOMON domain-containing protein Y73F4A.2 from Caenorhabditis elegans.